We begin with the raw amino-acid sequence, 170 residues long: Probable T4-type lysozyme 2 (170 aa).

Residue Glu13 is the Proton donor of the active site. The active-site Nucleophile is Asp22.

Belongs to the glycosyl hydrolase 24 family.

The enzyme catalyses Hydrolysis of (1-&gt;4)-beta-linkages between N-acetylmuramic acid and N-acetyl-D-glucosamine residues in a peptidoglycan and between N-acetyl-D-glucosamine residues in chitodextrins.. The chain is Probable T4-type lysozyme 2 from Dictyostelium discoideum (Social amoeba).